A 483-amino-acid polypeptide reads, in one-letter code: NADH-quinone oxidoreductase subunit N (483 aa).

13 helical membrane passes run A11–L31, S37–T57, L82–S100, F110–L130, F164–V184, A205–V225, P239–I259, V268–G288, M301–G321, M329–L349, Y372–F392, G406–L426, and P446–F466.

The protein belongs to the complex I subunit 2 family. NDH-1 is composed of 14 different subunits. Subunits NuoA, H, J, K, L, M, N constitute the membrane sector of the complex.

The protein localises to the cell inner membrane. The enzyme catalyses a quinone + NADH + 5 H(+)(in) = a quinol + NAD(+) + 4 H(+)(out). NDH-1 shuttles electrons from NADH, via FMN and iron-sulfur (Fe-S) centers, to quinones in the respiratory chain. The immediate electron acceptor for the enzyme in this species is believed to be ubiquinone. Couples the redox reaction to proton translocation (for every two electrons transferred, four hydrogen ions are translocated across the cytoplasmic membrane), and thus conserves the redox energy in a proton gradient. The polypeptide is NADH-quinone oxidoreductase subunit N (Methylovorus glucosotrophus (strain SIP3-4)).